The sequence spans 509 residues: ATP synthase subunit alpha (509 aa).

169-176 is an ATP binding site; the sequence is GDRQTGKT.

It belongs to the ATPase alpha/beta chains family. As to quaternary structure, F-type ATPases have 2 components, CF(1) - the catalytic core - and CF(0) - the membrane proton channel. CF(1) has five subunits: alpha(3), beta(3), gamma(1), delta(1), epsilon(1). CF(0) has three main subunits: a(1), b(2) and c(9-12). The alpha and beta chains form an alternating ring which encloses part of the gamma chain. CF(1) is attached to CF(0) by a central stalk formed by the gamma and epsilon chains, while a peripheral stalk is formed by the delta and b chains.

It is found in the cell inner membrane. The catalysed reaction is ATP + H2O + 4 H(+)(in) = ADP + phosphate + 5 H(+)(out). Functionally, produces ATP from ADP in the presence of a proton gradient across the membrane. The alpha chain is a regulatory subunit. This Agrobacterium fabrum (strain C58 / ATCC 33970) (Agrobacterium tumefaciens (strain C58)) protein is ATP synthase subunit alpha.